The chain runs to 397 residues: Putative 8-amino-7-oxononanoate synthase (397 aa).

R22 is a binding site for substrate. 109-110 lines the pyridoxal 5'-phosphate pocket; it reads GW. H139 serves as a coordination point for substrate. Pyridoxal 5'-phosphate is bound by residues S187, 212–215, and 241–244; these read DEAH and TFSK. K244 bears the N6-(pyridoxal phosphate)lysine mark. T358 provides a ligand contact to substrate.

It belongs to the class-II pyridoxal-phosphate-dependent aminotransferase family. BioF subfamily. As to quaternary structure, homodimer. Pyridoxal 5'-phosphate serves as cofactor.

It catalyses the reaction 6-carboxyhexanoyl-[ACP] + L-alanine + H(+) = (8S)-8-amino-7-oxononanoate + holo-[ACP] + CO2. It functions in the pathway cofactor biosynthesis; biotin biosynthesis. Functionally, catalyzes the decarboxylative condensation of pimeloyl-[acyl-carrier protein] and L-alanine to produce 8-amino-7-oxononanoate (AON), [acyl-carrier protein], and carbon dioxide. This Bordetella parapertussis (strain 12822 / ATCC BAA-587 / NCTC 13253) protein is Putative 8-amino-7-oxononanoate synthase (bioF).